Reading from the N-terminus, the 89-residue chain is Small ribosomal subunit protein uS15 (89 aa).

Belongs to the universal ribosomal protein uS15 family. In terms of assembly, part of the 30S ribosomal subunit. Forms a bridge to the 50S subunit in the 70S ribosome, contacting the 23S rRNA.

Its function is as follows. One of the primary rRNA binding proteins, it binds directly to 16S rRNA where it helps nucleate assembly of the platform of the 30S subunit by binding and bridging several RNA helices of the 16S rRNA. Forms an intersubunit bridge (bridge B4) with the 23S rRNA of the 50S subunit in the ribosome. This is Small ribosomal subunit protein uS15 from Gluconobacter oxydans (strain 621H) (Gluconobacter suboxydans).